The chain runs to 336 residues: PHD finger protein 11 (336 aa).

A disordered region spans residues Met1–Pro20. A C2HC pre-PHD-type zinc finger spans residues Lys25–Leu61. Residues Leu91–Pro143 form a PHD-type zinc finger. Disordered regions lie at residues Cys139–Lys179 and Asp303–Leu336. A compositionally biased stretch (low complexity) spans Asp303 to Pro314.

As to quaternary structure, interacts with BRCA1 and RELA.

It is found in the nucleus. Functionally, positive regulator of Th1-type cytokine gene expression. The chain is PHD finger protein 11 (Phf11) from Rattus norvegicus (Rat).